Here is a 20-residue protein sequence, read N- to C-terminus: Cicerin (20 aa).

The disordered stretch occupies residues 1–20 (ARCENFADSYRQPPISSSQT).

In terms of biological role, has antifungal activity against B.cinerea, F.oxysporum and M.arachidicola. Inhibits cell-free translation in rabbit reticulocyte lysate system. The polypeptide is Cicerin (Cicer arietinum (Chickpea)).